Here is a 451-residue protein sequence, read N- to C-terminus: Histidinol dehydrogenase (451 aa).

A disordered region spans residues 1–20; the sequence is MLNVTDLRGHTPSKSDIRRA. The span at 7 to 19 shows a compositional bias: basic and acidic residues; the sequence is LRGHTPSKSDIRR. The NAD(+) site is built by tyrosine 129, glutamine 193, and asparagine 218. Substrate contacts are provided by threonine 241, glutamine 263, and histidine 266. Zn(2+)-binding residues include glutamine 263 and histidine 266. Catalysis depends on proton acceptor residues glutamate 332 and histidine 333. Substrate is bound by residues histidine 333, aspartate 366, glutamate 420, and histidine 425. Residue aspartate 366 coordinates Zn(2+). Histidine 425 serves as a coordination point for Zn(2+).

Belongs to the histidinol dehydrogenase family. It depends on Zn(2+) as a cofactor.

It carries out the reaction L-histidinol + 2 NAD(+) + H2O = L-histidine + 2 NADH + 3 H(+). It participates in amino-acid biosynthesis; L-histidine biosynthesis; L-histidine from 5-phospho-alpha-D-ribose 1-diphosphate: step 9/9. Functionally, catalyzes the sequential NAD-dependent oxidations of L-histidinol to L-histidinaldehyde and then to L-histidine. This chain is Histidinol dehydrogenase, found in Corynebacterium efficiens (strain DSM 44549 / YS-314 / AJ 12310 / JCM 11189 / NBRC 100395).